The chain runs to 351 residues: Uroporphyrinogen decarboxylase (351 aa).

Substrate is bound by residues 26-30 (RQAGR), Asp-75, Tyr-151, Ser-206, and His-321.

Belongs to the uroporphyrinogen decarboxylase family. In terms of assembly, homodimer.

It localises to the cytoplasm. It catalyses the reaction uroporphyrinogen III + 4 H(+) = coproporphyrinogen III + 4 CO2. It participates in porphyrin-containing compound metabolism; protoporphyrin-IX biosynthesis; coproporphyrinogen-III from 5-aminolevulinate: step 4/4. Catalyzes the decarboxylation of four acetate groups of uroporphyrinogen-III to yield coproporphyrinogen-III. The protein is Uroporphyrinogen decarboxylase of Koribacter versatilis (strain Ellin345).